The following is a 296-amino-acid chain: Prostate androgen-regulated mucin-like protein 1 homolog (296 aa).

The first 20 residues, 1–20 (MVCKALITLCIFAAGLRVQG), serve as a signal peptide directing secretion. Residues 21–244 (SPTPTLLPVS…EVENALSSGS (224 aa)) are Extracellular-facing. Asparagine 62, asparagine 96, and asparagine 108 each carry an N-linked (GlcNAc...) asparagine glycan. The segment at 73 to 220 (LTSQLPTHPR…SPQDTEPGKV (148 aa)) is disordered. Over residues 80–96 (HPREEAVTSPPLKREVN) the composition is skewed to basic and acidic residues. Residues 97 to 111 (STDSSPTGFSSNSSG) are compositionally biased toward low complexity. Residues 125 to 145 (SPETSVPATGSQSPTLLFSQG) are compositionally biased toward polar residues. Composition is skewed to low complexity over residues 146–175 (PTSA…TVNN) and 195–205 (SHTPTSHVTEP). Asparagine 168 carries an N-linked (GlcNAc...) asparagine glycan. Residues 206–217 (VPKEKSPQDTEP) are compositionally biased toward basic and acidic residues. A helical membrane pass occupies residues 245 to 265 (IAAITVTVIAVVLLVFGAAAY). Over 266–296 (LKIRHSSYGRLLDDHDYGSWGNYNNPLYDDS) the chain is Cytoplasmic. The residue at position 284 (serine 284) is a Phosphoserine.

Belongs to the PARM family. Post-translationally, highly N-glycosylated and O-glycosylated. As to expression, expressed in prostate. Detected in other organs at low levels, these include the heart and various tissues of the urogenital tract. Not detected in mammary gland.

The protein localises to the cell membrane. It localises to the golgi apparatus membrane. It is found in the endosome membrane. May regulate TLP1 expression and telomerase activity, thus enabling certain prostatic cells to resist apoptosis. In Rattus norvegicus (Rat), this protein is Prostate androgen-regulated mucin-like protein 1 homolog (Parm1).